The primary structure comprises 433 residues: Pyrimidine-nucleoside phosphorylase (433 aa).

Position 81–83 (81–83 (KHS)) interacts with phosphate. K(+)-binding residues include Gly88 and Thr90. Phosphate contacts are provided by residues Thr92, 108 to 110 (KMS), and Thr120. Substrate is bound by residues Arg168 and Lys187. K(+) is bound by residues Leu243, Ala246, and Glu255.

This sequence belongs to the thymidine/pyrimidine-nucleoside phosphorylase family. As to quaternary structure, homodimer. The cofactor is K(+).

The catalysed reaction is uridine + phosphate = alpha-D-ribose 1-phosphate + uracil. It catalyses the reaction thymidine + phosphate = 2-deoxy-alpha-D-ribose 1-phosphate + thymine. The enzyme catalyses 2'-deoxyuridine + phosphate = 2-deoxy-alpha-D-ribose 1-phosphate + uracil. Functionally, catalyzes phosphorolysis of the pyrimidine nucleosides uridine, thymidine and 2'-deoxyuridine with the formation of the corresponding pyrimidine base and ribose-1-phosphate. In Staphylococcus haemolyticus (strain JCSC1435), this protein is Pyrimidine-nucleoside phosphorylase (pdp).